The primary structure comprises 432 residues: Transcriptional adapter 3 (432 aa).

Lysine 21 participates in a covalent cross-link: Glycyl lysine isopeptide (Lys-Gly) (interchain with G-Cter in SUMO2). A coiled-coil region spans residues isoleucine 40–glutamine 69. The tract at residues glycine 87–glutamine 127 is disordered. A Glycyl lysine isopeptide (Lys-Gly) (interchain with G-Cter in SUMO2) cross-link involves residue lysine 129. Composition is skewed to basic and acidic residues over residues aspartate 211–lysine 223 and leucine 232–proline 251. 2 disordered regions span residues aspartate 211–phenylalanine 257 and glutamate 271–lysine 319. Serine 280 and serine 298 each carry phosphoserine. Residues alanine 295–proline 305 show a composition bias toward polar residues. Residues leucine 367 to threonine 407 are a coiled coil. The residue at position 418 (lysine 418) is an N6-acetyllysine.

Belongs to the NGG1 family. As to quaternary structure, the PCAF complex is composed of a number of TBP-associated factors (TAFS), such as TAF5, TAF5L, TAF6, TAF6L, TAF9, TAF10 and TAF12, PCAF, and also PCAF-associated factors (PAFs), such as TADA2L/ADA2, TADA3L/ADA3 and SPT3. Interacts directly with TADA2L and PCAF and also with the high-risk HPV oncoprotein E6. Component of the STAGA transcription coactivator-HAT complex, at least composed of SUPT3H, GCN5L2, TAF5L, TAF6L, SUPT7L, TADA3L, TAD1L, TAF10, TAF12, TRRAP and TAF9. Component of the TFTC-HAT complex. Component of the ADA2A-containing complex (ATAC), composed of KAT14, KAT2A, TADA2L, TADA3L, ZZ3, MBIP, WDR5, YEATS2, CCDC101 and DR1.

The protein resides in the nucleus. Functions as a component of the PCAF complex. The PCAF complex is capable of efficiently acetylating histones in a nucleosomal context. The PCAF complex could be considered as the human version of the yeast SAGA complex. Also known as a coactivator for p53/TP53-dependent transcriptional activation. Component of the ATAC complex, a complex with histone acetyltransferase activity on histones H3 and H4. This is Transcriptional adapter 3 (TADA3) from Pongo abelii (Sumatran orangutan).